Here is a 268-residue protein sequence, read N- to C-terminus: Tryptophan synthase alpha chain (268 aa).

Catalysis depends on proton acceptor residues glutamate 49 and aspartate 60.

The protein belongs to the TrpA family. As to quaternary structure, tetramer of two alpha and two beta chains.

The enzyme catalyses (1S,2R)-1-C-(indol-3-yl)glycerol 3-phosphate + L-serine = D-glyceraldehyde 3-phosphate + L-tryptophan + H2O. It participates in amino-acid biosynthesis; L-tryptophan biosynthesis; L-tryptophan from chorismate: step 5/5. Its function is as follows. The alpha subunit is responsible for the aldol cleavage of indoleglycerol phosphate to indole and glyceraldehyde 3-phosphate. This Escherichia coli O17:K52:H18 (strain UMN026 / ExPEC) protein is Tryptophan synthase alpha chain.